Here is a 363-residue protein sequence, read N- to C-terminus: 3-dehydroquinate synthase (363 aa).

NAD(+) contacts are provided by residues 70 to 75 (SGETSK), 104 to 108 (GVIGD), 128 to 129 (TT), lysine 141, lysine 150, and 168 to 171 (TLDT). Positions 183, 245, and 262 each coordinate Zn(2+).

Belongs to the sugar phosphate cyclases superfamily. Dehydroquinate synthase family. Requires Co(2+) as cofactor. The cofactor is Zn(2+). NAD(+) is required as a cofactor.

Its subcellular location is the cytoplasm. The enzyme catalyses 7-phospho-2-dehydro-3-deoxy-D-arabino-heptonate = 3-dehydroquinate + phosphate. It functions in the pathway metabolic intermediate biosynthesis; chorismate biosynthesis; chorismate from D-erythrose 4-phosphate and phosphoenolpyruvate: step 2/7. In terms of biological role, catalyzes the conversion of 3-deoxy-D-arabino-heptulosonate 7-phosphate (DAHP) to dehydroquinate (DHQ). The protein is 3-dehydroquinate synthase of Alkaliphilus oremlandii (strain OhILAs) (Clostridium oremlandii (strain OhILAs)).